A 312-amino-acid chain; its full sequence is Glycine--tRNA ligase alpha subunit (312 aa).

This sequence belongs to the class-II aminoacyl-tRNA synthetase family. Tetramer of two alpha and two beta subunits.

The protein resides in the cytoplasm. The catalysed reaction is tRNA(Gly) + glycine + ATP = glycyl-tRNA(Gly) + AMP + diphosphate. This Thiobacillus denitrificans (strain ATCC 25259 / T1) protein is Glycine--tRNA ligase alpha subunit.